The primary structure comprises 440 residues: MLEMSKRQSPRGAGLAPTIAWRVFQLLTLAGVLWVGWRLLGRVPYRIDIDVYRMGGRAWLDGRPLYADGAIFHTQGGLDLPFTYPPLAAIAFAPFAWLSLPLASSAITATTLVLLIVATTIVLTRLDVWPHTTVTSEPAWMRRAWLAAAMVAPAVIYLEPIRSNFEFGQINVVLMTLVIADCVPRRTPWPRGLLLGLAIALKLTPAVFLLYFLLRRDIHTLLRTAATAVVASLAGFALAWSDSVEYWTETVRNTDRIGTATLNTNQNIAGALARLGLGESPRFILWVLACFAVLALTVWAARRALRGDTADQTTEAPVLALVCVALFGLVVSPVSWSHHWVWMLPVLVVTAVLAYRRRSVWFTALTAAGLALTVWTPITLLPEHRETTASLWRQLAGGSYVWWAFAVIVVIGLVSSSRTHTGDAHETDEPLVPLARGEAG.

Transmembrane regions (helical) follow at residues 15–35 (LAPT…VLWV), 87–107 (LAAI…SSAI), 109–129 (ATTL…LDVW), 144–161 (AWLA…LEPI), 164–184 (NFEF…DCVP), 193–213 (LLLG…LYFL), 224–244 (TAAT…SDSV), 281–301 (PRFI…VWAA), 316–336 (APVL…PVSW), 360–380 (VWFT…PITL), and 395–415 (LAGG…GLVS). The segment at 419–440 (THTGDAHETDEPLVPLARGEAG) is disordered.

Belongs to the glycosyltransferase 87 family.

The protein localises to the cell membrane. It functions in the pathway phospholipid metabolism; phosphatidylinositol metabolism. In terms of biological role, responsible for the addition of alpha-(1-2) mannose branches to the linear mannan core on the biosynthetic pathway to mature Lipoarabinomannan (LAM). This is Polyprenol-phosphate-mannose-dependent alpha-(1-2)-phosphatidylinositol mannoside mannosyltransferase from Mycolicibacterium smegmatis (strain ATCC 700084 / mc(2)155) (Mycobacterium smegmatis).